The following is a 2140-amino-acid chain: MAERRAFAQKISRTVAAEVRKQISGQYSGSPQLLKNLNIVGNISHHTTVPLTEAVDPVDLEDYLITHPLAVDSGPLRDLIEFPPDDIEVVYSPRDCRTLVSAVPEESEMDPHVRDCIRSYTEDWAIVIRKYHKLGTGFNPNTLDKQKERQKGLPKQVFESDEAPDGNSYQDDQDDLKRRSMSIDDTPRGSWACSIFDLKNSLPDALLPNLLDRTPNEEIDRQNDDQRKSNRHKELFALHPSPDEEEPIERLSVPDIPKEHFGQRLLVKCLSLKFEIEIEPIFASLALYDVKEKKKISENFYFDLNSEQMKGLLRPHVPPAAITTLARSAIFSITYPSQDVFLVIKLEKVLQQGDIGECAEPYMIFKEADATKNKEKLEKLKSQADQFCQRLGKYRMPFAWTAIHLMNIVSSAGSLERDSTEVEISTGERKGSWSERRNSSIVGRRSLERTTSGDDACNLTSFRPATLTVTNFFKQEGDRLSDEDLYKFLADMRRPSSVLRRLRPITAQLKIDISPAPENPHYCLTPELLQVKLYPDSRVRPTREILEFPARDVYVPNTTYRNLLYIYPQSLNFANRQGSARNITVKVQFMYGEDPSNAMPVIFGKSSCSEFSKEAYTAVVYHNRSPDFHEEIKVKLPATLTDHHHLLFTFYHVSCQQKQNTPLETPVGYTWIPMLQNGRLKTGQFCLPVSLEKPPQAYSVLSPEVPLPGMKWVDNHKGVFNVEVVAVSSIHTQDPYLDKFFALVNALDEHLFPVRIGDMRIMENNLENELKSSISALNSSQLEPVVRFLHLLLDKLILLVIRPPVIAGQIVNLGQASFEAMASIINRLHKNLEGNHDQHGRNSLLASYIHYVFRLPNTYPNSSSPGPGGLGGSVHYATMARSAVRPASLNLNRSRSLSNSNPDISGTPTSPDDEVRSIIGSKGLDRSNSWVNTGGPKAAPWGSNPSPSAESTQAMDRSCNRMSSHTETSSFLQTLTGRLPTKKLFHEELALQWVVCSGSVRESALQQAWFFFELMVKSMVHHLYFNDKLEAPRKSRFPERFMDDIAALVSTIASDIVSRFQKDTEMVERLNTSLAFFLNDLLSVMDRGFVFSLIKSCYKQVSSKLYSLPNPSVLVSLRLDFLRIICSHEHYVTLNLPCSLLTPPASPSPSVSSATSQSSGFSTNVQDQKIANMFELSVPFRQQHYLAGLVLTELAVILDPDAEGLFGLHKKVINMVHNLLSSHDSDPRYSDPQIKARVAMLYLPLIGIIMETVPQLYDFTETHNQRGRPICIATDDYESESGSMISQTVAMAIAGTSVPQLTRPGSFLLTSTSGRQHTTFSAESSRSLLICLLWVLKNADETVLQKWFTDLSVLQLNRLLDLLYLCVSCFEYKGKKVFERMNSLTFKKSKDMRAKLEEAILGSIGARQEMVRRSRGQLGTYTIASPPERSPSGSAFGSQENLRWRKDMTHWRQNTEKLDKSRAEIEHEALIDGNLATEANLIILDTLEIVVQTVSVTESKESILGGVLKVLLHSMACNQSAVYLQHCFATQRALVSKFPELLFEEETEQCADLCLRLLRHCSSSIGTIRSHASASLYLLMRQNFEIGNNFARVKMQVTMSLSSLVGTSQNFNEEFLRRSLKTILTYAEEDLELRETTFPDQVQDLVFNLHMILSDTVKMKEHQEDPEMLIDLMYRIAKGYQTSPDLRLTWLQNMAGKHSERSNHAEAAQCLVHSAALVAEYLSMLEDRKYLPVGCVTFQNISSNVLEESAVSDDVVSPDEEGICSGKYFTESGLVGLLEQAAASFSMAGMYEAVNEVYKVLIPIHEANRDAKKLSTIHGKLQEAFSKIVHQSTGWERMFGTYFRVGFYGTKFGDLDEQEFVYKEPAITKLAEISHRLEGFYGERFGEDVVEVIKDSNPVDKCKLDPNKAYIQITYVEPYFDTYEMKDRITYFDKNYNLRRFMYCTPFTLDGRAHGELHEQFKRKTILTTSHAFPYIKTRVNVTHKEEIILTPIEVAIEDMQKKTQELAFATHQDPADPKMLQMVLQGSVGTTVNQGPLEVAQVFLSEIPSDPKLFRHHNKLRLCFKDFTKRCEDALRKNKSLIGPDQKEYQRELERNYHRLKEALQPLINRKIPQLYKAVLPVTCHRDSFSRMSLRKMDL.

A phosphoserine mark is found at S30, S180, and S182. The segment at 138–183 is disordered; sequence FNPNTLDKQKERQKGLPKQVFESDEAPDGNSYQDDQDDLKRRSMSI. Residues 365–395 are a coiled coil; that stretch reads FKEADATKNKEKLEKLKSQADQFCQRLGKYR. The residue at position 381 (K381) is an N6-methyllysine. Residue T450 is modified to Phosphothreonine. The residue at position 452 (S452) is a Phosphoserine. One can recognise a C2 DOCK-type domain in the interval 561–727; that stretch reads RNLLYIYPQS…GVFNVEVVAV (167 aa). S862, S864, S882, S888, S896, S900, and S905 each carry phosphoserine. The span at 888–901 shows a compositional bias: low complexity; it reads SLNLNRSRSLSNSN. The tract at residues 888–971 is disordered; that stretch reads SLNLNRSRSL…MSSHTETSSF (84 aa). Phosphothreonine occurs at positions 907 and 909. Residues S910, S929, S964, S1383, K1390, A1394, E1398, Y1421, S1425, R1429, S1430, S1432, S1434, and S1438 each carry the phosphoserine modification. Residues 943–971 are compositionally biased toward polar residues; the sequence is SNPSPSAESTQAMDRSCNRMSSHTETSSF. The region spanning 1678–2114 is the DOCKER domain; sequence KGYQTSPDLR…LQPLINRKIP (437 aa). An N6-acetyllysine modification is found at K1962. Positions 2086–2112 form a coiled coil; that stretch reads DQKEYQRELERNYHRLKEALQPLINRK. At S2129 the chain carries Phosphoserine.

This sequence belongs to the DOCK family. Component of the DOCK7-induced septin displacement/DISP complex, at least composed of DOCK7, LRCH3 and MYO6. Interacts with TSC1. Interacts with nucleotide-free RAC1 and RAC3. Interacts with TACC3 and CRY1. Interacts with NOD2. In terms of tissue distribution, widely expressed.

Its subcellular location is the cell projection. The protein resides in the axon. In terms of biological role, functions as a guanine nucleotide exchange factor (GEF), which activates Rac1 and Rac3 Rho small GTPases by exchanging bound GDP for free GTP. Does not have a GEF activity for CDC42. Required for STMN1 'Ser-15' phosphorylation during axon formation and consequently for neuronal polarization. As part of the DISP complex, may regulate the association of septins with actin and thereby regulate the actin cytoskeleton. Has a role in pigmentation. Involved in the regulation of cortical neurogenesis through the control of radial glial cells (RGCs) proliferation versus differentiation; negatively regulates the basal-to-apical interkinetic nuclear migration of RGCs by antagonizing the microtubule growth-promoting function of TACC3. This chain is Dedicator of cytokinesis protein 7 (DOCK7), found in Homo sapiens (Human).